Consider the following 492-residue polypeptide: Glutamyl-tRNA(Gln) amidotransferase subunit B, mitochondrial (492 aa).

The protein belongs to the GatB/GatE family. GatB subfamily. Subunit of the heterotrimeric GatFAB amidotransferase (AdT) complex, composed of A, B and F subunits.

Its subcellular location is the mitochondrion. The enzyme catalyses L-glutamyl-tRNA(Gln) + L-glutamine + ATP + H2O = L-glutaminyl-tRNA(Gln) + L-glutamate + ADP + phosphate + H(+). In terms of biological role, allows the formation of correctly charged Gln-tRNA(Gln) through the transamidation of misacylated Glu-tRNA(Gln) in the mitochondria. The reaction takes place in the presence of glutamine and ATP through an activated gamma-phospho-Glu-tRNA(Gln). The chain is Glutamyl-tRNA(Gln) amidotransferase subunit B, mitochondrial from Komagataella phaffii (strain GS115 / ATCC 20864) (Yeast).